Consider the following 446-residue polypeptide: Glucose-6-phosphate isomerase (446 aa).

Glu288 functions as the Proton donor in the catalytic mechanism. Residues His309 and Lys423 contribute to the active site.

Belongs to the GPI family.

Its subcellular location is the cytoplasm. It catalyses the reaction alpha-D-glucose 6-phosphate = beta-D-fructose 6-phosphate. Its pathway is carbohydrate biosynthesis; gluconeogenesis. It functions in the pathway carbohydrate degradation; glycolysis; D-glyceraldehyde 3-phosphate and glycerone phosphate from D-glucose: step 2/4. Functionally, catalyzes the reversible isomerization of glucose-6-phosphate to fructose-6-phosphate. The sequence is that of Glucose-6-phosphate isomerase from Lacticaseibacillus casei (strain BL23) (Lactobacillus casei).